The following is an 826-amino-acid chain: MAEPSAPESKHKSSLNSSPWSGLMALGNSRHGHHGPGAQCAHKAAGGVAPPKPAPAGLSGGLSQPAGWQSLLSFTILFLAWLAGFSSRLFAVIRFESIIHEFDPWFNYRSTHHLASHGFYEFLNWFDERAWYPLGRIVGGTVYPGLMITAGLIHWILNTLNITVHIRDVCVFLAPTFSGLTSISTFLLTRELWNQGAGLLAACFIAIVPGYISRSVAGSFDNEGIAIFALQFTYYLWVKSVKTGSVFWTMCCCLSYFYMVSAWGGYVFIINLIPLHVFVLLLMQRYSKRVYIAYSTFYIVGLILSMQIPFVGFQPIRTSEHMAAAGVFALLQAYAFLQYLRDRLTKQEFQTLFFLGVSLAAGAVFLSVIYLTYTGYIAPWSGRFYSLWDTGYAKIHIPIIASVSEHQPTTWVSFFFDLHILVCTFPAGLWFCIKNINDERVFVALYAISAVYFAGVMVRLMLTLTPVVCMLSAIAFSNVFEHYLGDDMKRENPPVEDSSDEDDKRNPGNLYDKAGKVRKHVTEQEKTEEGLGPNIKSIVTMLMLMLLMMFAVHCTWVTSNAYSSPSVVLASYNHDGTRNILDDFREAYFWLRQNTDEHARVMSWWDYGYQIAGMANRTTLVDNNTWNNSHIALVGKAMSSNESAAYKIMRSLDVDYVLVIFGGVIGYSGDDINKFLWMVRIAEGEHPKDIRESDYFTPQGEFRVDKAGSPTLLNCLMYKMSYYRFGEMQLDFRTPPGFDRTRNAEIGNKDIKFKHLEEAFTSEHWLVRIYKVKAPDNRETLDHKPRVTNIFPKQKYLSKKTTKRKRGYIKNKLVFKKGKKISKKTV.

Positions 1–60 are disordered; it reads MAEPSAPESKHKSSLNSSPWSGLMALGNSRHGHHGPGAQCAHKAAGGVAPPKPAPAGLSG. Position 2 is an N-acetylalanine (alanine 2). Residues 2 to 41 lie on the Cytoplasmic side of the membrane; that stretch reads AEPSAPESKHKSSLNSSPWSGLMALGNSRHGHHGPGAQCA. Phosphoserine is present on residues serine 13, serine 18, and serine 29. Residues 42–86 form a helical membrane-spanning segment; that stretch reads HKAAGGVAPPKPAPAGLSGGLSQPAGWQSLLSFTILFLAWLAGFS. The Lumenal portion of the chain corresponds to 87–173; the sequence is SRLFAVIRFE…VHIRDVCVFL (87 aa). Positions 101-103 match the DXD motif 1 motif; it reads EFD. Aspartate 103 serves as a coordination point for Mn(2+). The helical transmembrane segment at 174 to 192 threads the bilayer; the sequence is APTFSGLTSISTFLLTREL. At 193 to 194 the chain is on the cytoplasmic side; that stretch reads WN. The helical transmembrane segment at 195 to 212 threads the bilayer; sequence QGAGLLAACFIAIVPGYI. Topologically, residues 213 to 223 are lumenal; the sequence is SRSVAGSFDNE. Mn(2+) is bound by residues aspartate 221 and glutamate 223. Positions 221–223 match the DXD motif 2 motif; that stretch reads DNE. A helical transmembrane segment spans residues 224 to 243; that stretch reads GIAIFALQFTYYLWVKSVKT. The Cytoplasmic portion of the chain corresponds to 244–245; it reads GS. A helical transmembrane segment spans residues 246–260; the sequence is VFWTMCCCLSYFYMV. Topologically, residues 261–265 are lumenal; sequence SAWGG. The helical transmembrane segment at 266–282 threads the bilayer; sequence YVFIINLIPLHVFVLLL. Over 283–287 the chain is Cytoplasmic; sequence MQRYS. The chain crosses the membrane as a helical span at residues 288-313; it reads KRVYIAYSTFYIVGLILSMQIPFVGF. Residues 314-321 lie on the Lumenal side of the membrane; sequence QPIRTSEH. Residues 322 to 341 traverse the membrane as a helical segment; it reads MAAAGVFALLQAYAFLQYLR. At 342 to 350 the chain is on the cytoplasmic side; that stretch reads DRLTKQEFQ. The helical transmembrane segment at 351–371 threads the bilayer; that stretch reads TLFFLGVSLAAGAVFLSVIYL. The Lumenal segment spans residues 372 to 410; the sequence is TYTGYIAPWSGRFYSLWDTGYAKIHIPIIASVSEHQPTT. Residues 402-405 carry the SVSE motif motif; sequence SVSE. Residues 411 to 433 traverse the membrane as a helical segment; it reads WVSFFFDLHILVCTFPAGLWFCI. The Cytoplasmic segment spans residues 434–439; the sequence is KNINDE. A helical transmembrane segment spans residues 440–456; sequence RVFVALYAISAVYFAGV. Residues 457-460 are Lumenal-facing; the sequence is MVRL. Arginine 459 serves as a coordination point for dolichyl diphosphooligosaccharide. The chain crosses the membrane as a helical span at residues 461 to 482; the sequence is MLTLTPVVCMLSAIAFSNVFEH. The Cytoplasmic portion of the chain corresponds to 483–526; the sequence is YLGDDMKRENPPVEDSSDEDDKRNPGNLYDKAGKVRKHVTEQEK. The segment at 490–512 is disordered; sequence RENPPVEDSSDEDDKRNPGNLYD. Residues serine 498 and serine 499 each carry the phosphoserine modification. A helical transmembrane segment spans residues 527-552; the sequence is TEEGLGPNIKSIVTMLMLMLLMMFAV. Residues 553-826 lie on the Lumenal side of the membrane; the sequence is HCTWVTSNAY…KGKKISKKTV (274 aa). An interacts with target acceptor peptide in protein substrate region spans residues 604–606; that stretch reads WWD. The short motif at 604–608 is the WWDYG motif element; sequence WWDYG. Tyrosine 609 is a binding site for dolichyl diphosphooligosaccharide. 2 N-linked (GlcNAc...) asparagine glycosylation sites follow: asparagine 616 and asparagine 623. The N-linked (GlcNAc...) (high mannose) asparagine glycan is linked to asparagine 627. A glycan (N-linked (GlcNAc...) asparagine) is linked at asparagine 641. A DK motif motif is present at residues 671–678; it reads DINKFLWM.

This sequence belongs to the STT3 family. As to quaternary structure, component of the oligosaccharyltransferase (OST) complex. There are 2 OST complexes, OST-A and OST-B, which contain STT3A or STT3B as catalytic subunit, respectively. OST-A and OST-B contain common core subunits RPN1, RPN2, OST48, OST4, DAD1 and TMEM258, and OST-B contains either MAGT1 or TUSC3 as specific accessory subunit. Mg(2+) is required as a cofactor. Requires Mn(2+) as cofactor.

Its subcellular location is the endoplasmic reticulum. The protein localises to the endoplasmic reticulum membrane. It catalyses the reaction a di-trans,poly-cis-dolichyl diphosphooligosaccharide + L-asparaginyl-[protein] = N(4)-(oligosaccharide-(1-&gt;4)-N-acetyl-beta-D-glucosaminyl-(1-&gt;4)-N-acetyl-beta-D-glucosaminyl)-L-asparaginyl-[protein] + a di-trans,poly-cis-dolichyl diphosphate + H(+). It participates in protein modification; protein glycosylation. Its function is as follows. Catalytic subunit of the oligosaccharyl transferase (OST) complex that catalyzes the initial transfer of a defined glycan (Glc(3)Man(9)GlcNAc(2) in eukaryotes) from the lipid carrier dolichol-pyrophosphate to an asparagine residue within an Asn-X-Ser/Thr consensus motif in nascent polypeptide chains, the first step in protein N-glycosylation. N-glycosylation occurs cotranslationally and the complex associates with the Sec61 complex at the channel-forming translocon complex that mediates protein translocation across the endoplasmic reticulum (ER). All subunits are required for a maximal enzyme activity. This subunit contains the active site and the acceptor peptide and donor lipid-linked oligosaccharide (LLO) binding pockets. STT3B is present in a small subset of OST complexes and mediates both cotranslational and post-translational N-glycosylation of target proteins: STT3B-containing complexes are required for efficient post-translational glycosylation and while they are less competent than STT3A-containing complexes for cotranslational glycosylation, they have the ability to mediate glycosylation of some nascent sites that are not accessible for STT3A. STT3B-containing complexes also act post-translationally and mediate modification of skipped glycosylation sites in unfolded proteins. Plays a role in ER-associated degradation (ERAD) pathway that mediates ubiquitin-dependent degradation of misfolded endoplasmic reticulum proteins by mediating N-glycosylation of unfolded proteins, which are then recognized by the ERAD pathway and targeted for degradation. This chain is Dolichyl-diphosphooligosaccharide--protein glycosyltransferase subunit STT3B, found in Canis lupus familiaris (Dog).